The chain runs to 139 residues: Putative pre-16S rRNA nuclease (139 aa).

Belongs to the YqgF nuclease family.

It is found in the cytoplasm. Its function is as follows. Could be a nuclease involved in processing of the 5'-end of pre-16S rRNA. In Streptococcus pyogenes serotype M1, this protein is Putative pre-16S rRNA nuclease.